A 1594-amino-acid chain; its full sequence is Mucin-like protein (1594 aa).

Residues 1-1530 (DTTAGPDTTS…YETREDGLEM (1530 aa)) are Extracellular-facing. 3 TSP type-1 domains span residues 141-196 (DGGF…GSCP), 198-253 (DGNF…PPCP), and 255-310 (DGNF…GPCP). 9 disulfides stabilise this stretch: Cys153–Cys190, Cys157–Cys195, Cys168–Cys180, Cys210–Cys247, Cys214–Cys252, Cys225–Cys237, Cys267–Cys304, Cys271–Cys309, and Cys282–Cys294. The NIDO domain occupies 400-566 (LTISDDAFEQ…GVWFFRLEMN (167 aa)). Residues 568-706 (ILSLAGKKCN…RSCFGYTLRR (139 aa)) enclose the AMOP domain. In terms of domain architecture, VWFD spans 706–901 (RRGLIFGDPH…KWQINASQSL (196 aa)). EGF-like domains are found at residues 1063–1108 (LILL…QYCQ) and 1110–1156 (KIDA…SICE). Cystine bridges form between Cys1067–Cys1075, Cys1069–Cys1096, Cys1098–Cys1107, Cys1114–Cys1127, Cys1121–Cys1141, Cys1144–Cys1155, Cys1161–Cys1173, Cys1169–Cys1182, Cys1285–Cys1296, Cys1292–Cys1305, Cys1307–Cys1320, Cys1326–Cys1341, Cys1334–Cys1350, and Cys1352–Cys1363. An EGF-like 3; calcium-binding domain is found at 1157-1191 (DIDECSDANVSKCDHSCINLPGSYVCDCNQGFSLE). Residues 1281-1321 (DINECTTHRHKCSQICHNLDGSYTCSCQPGFNLSPDQTTCE) form the EGF-like 4; calcium-binding domain. Residues 1322–1364 (DIDECGLINEAHCEGSLEICINTMGSFRCECQDGFHRVNDTCQ) enclose the EGF-like 5; calcium-binding domain. The helical transmembrane segment at 1531–1551 (IWLLVGVSVAVAVPLMIVIVI) threads the bilayer. At 1552-1593 (LYREYRRIAKQRRKTNNFDLRQWSGARERTIYSGFTNSKSAR) the chain is on the cytoplasmic side.

In terms of tissue distribution, component of the acid-insoluble and acid-soluble organic matrix of the aragonitic skeleton (at protein level).

The protein localises to the membrane. This is Mucin-like protein from Acropora millepora (Staghorn coral).